An 89-amino-acid polypeptide reads, in one-letter code: Large ribosomal subunit protein bL27 (89 aa).

The tract at residues 1 to 21 is disordered; that stretch reads MAHKKGASSSRNGRDSNAQRL. The segment covering 7–19 has biased composition (polar residues); the sequence is ASSSRNGRDSNAQ.

Belongs to the bacterial ribosomal protein bL27 family.

This Frankia alni (strain DSM 45986 / CECT 9034 / ACN14a) protein is Large ribosomal subunit protein bL27.